A 180-amino-acid polypeptide reads, in one-letter code: Virion protein US10 homolog (180 aa).

The protein belongs to the herpesviridae US10 family. In terms of processing, phosphorylated.

It is found in the virion tegument. It localises to the host nucleus matrix. In Varicella-zoster virus (strain Dumas) (HHV-3), this protein is Virion protein US10 homolog (64).